A 72-amino-acid chain; its full sequence is uncharacterized protein (72 aa).

This is an uncharacterized protein from Escherichia coli (strain K12).